A 323-amino-acid polypeptide reads, in one-letter code: Vertebrate ancient opsin (323 aa).

The Extracellular segment spans residues 1–38 (MDTLRIAVNGVSYNEASEIYKPHADPFTGPITNLAPWN). Residues 39–63 (FAVLATLMFVITSLSLFENFTVMLA) traverse the membrane as a helical segment. The Cytoplasmic segment spans residues 64–75 (TYKFKQLRQPLN). Residues 76-100 (YIIVNLSLADFLVSLTGGTISFLTN) traverse the membrane as a helical segment. The Extracellular segment spans residues 101–115 (ARGYFFLGNWACVLE). Cys-112 and Cys-189 are joined by a disulfide. A helical membrane pass occupies residues 116–135 (GFAVTYFGIVAMWSLAVLSF). Over 136–154 (ERYFVICRPLGNVRLRGKH) the chain is Cytoplasmic. Residues 155-178 (AALGLLFVWTFSFIWTIPPVFGWC) traverse the membrane as a helical segment. Topologically, residues 179–202 (SYTVSKIGTTCEPNWYSNNIWNHT) are extracellular. N-linked (GlcNAc...) asparagine glycosylation is present at Asn-200. The chain crosses the membrane as a helical span at residues 203 to 230 (YIITFFVTCFIMPLGMIIYCYGKLLQKL). Over 231-250 (RKVSHDRLGNAKKPERQVSR) the chain is Cytoplasmic. The helical transmembrane segment at 251–274 (MVVVMIVAYLVGWTPYAAFSIIVT) threads the bilayer. The Extracellular segment spans residues 275 to 282 (ACPTIYLD). Residues 283–307 (PRLAAAPAFFSKTAAVYNPVIYVFM) traverse the membrane as a helical segment. Lys-294 is modified (N6-(retinylidene)lysine). The Cytoplasmic portion of the chain corresponds to 308–323 (NKQVSTQLNWGFWSRA).

It belongs to the G-protein coupled receptor 1 family. Opsin subfamily. Post-translationally, phosphorylated on some or all of the serine and threonine residues present in the C-terminal region.

Its subcellular location is the membrane. The protein is Vertebrate ancient opsin of Salmo salar (Atlantic salmon).